A 648-amino-acid chain; its full sequence is Siderophore transporter MYCGRDRAFT_70577 (648 aa).

2 stretches are compositionally biased toward basic and acidic residues: residues 1–11 and 29–46; these read MRTSSESHSRS and SASK…DTSI. Positions 1 to 58 are disordered; sequence MRTSSESHSRSDAFNGKNDASQVTVDSDSASKDHHDHDHHHKDTSINERQSQHVHQQA. The span at 47 to 58 shows a compositional bias: polar residues; the sequence is NERQSQHVHQQA. Helical transmembrane passes span 79–99, 151–171, 205–225, 236–256, 303–323, 336–356, 409–429, 438–458, 468–488, 500–520, and 578–598; these read LLLY…ALDQ, VVVL…QGLA, AFWS…NGFI, WGLG…IWTL, LIGL…LNLA, IAML…EALL, TIFI…GGLI, TLMV…LDGN, LAVS…ARVG, VVIS…STIA, and GIIL…SCLM.

This sequence belongs to the major facilitator superfamily.

It is found in the cell membrane. In terms of biological role, siderophore transporter; part of the gene cluster 14 that mediates the biosynthesis of a ferrichrome A-like siderophors which may contribute to organismal virulence. The chain is Siderophore transporter MYCGRDRAFT_70577 from Zymoseptoria tritici (strain CBS 115943 / IPO323) (Speckled leaf blotch fungus).